Reading from the N-terminus, the 1086-residue chain is NAD(P) transhydrogenase, mitochondrial (1086 aa).

The transit peptide at 1–43 directs the protein to the mitochondrion; it reads MANLLKTVVTGCSCPFLSNLGSCKVLPGKKNFLRTFHTHRILW. At 44–474 the chain is on the mitochondrial matrix side; sequence CSAPVKPGIP…TITPFRKTMT (431 aa). Residue lysine 70 is modified to N6-acetyllysine. Position 117 is an N6-succinyllysine (lysine 117). Residue 182–184 coordinates NAD(+); that stretch reads RVT. Lysine 224 is subject to N6-succinyllysine. NAD(+) contacts are provided by residues valine 237, 257–259, and glycine 287; that span reads DTR. Residue lysine 294 is modified to N6-succinyllysine. Residues glutamate 300 and leucine 319 each coordinate NAD(+). N6-succinyllysine is present on lysine 331. N6-acetyllysine is present on lysine 397. The next 4 membrane-spanning stretches (helical) occupy residues 475-493, 501-521, 527-546, and 558-578; these read SASVYTAGLTGILGLGIAA, MVTTFGLAGIVGYHTVWGVTP, LMSVTNAISGLTAVGGLVLM, and GLAALATFISSVNIAGGFLVT. At 579-595 the chain is on the mitochondrial matrix side; the sequence is QRMLDMFKRPTDPPEYN. A run of 5 helical transmembrane segments spans residues 596 to 616, 622 to 642, 646 to 666, 672 to 691, and 702 to 722; these read YLYLLPAGTFVGGYLASLYSG, IMYLGSGLCCVGALAGLSTQG, LGNALGMIGVAGGLAATLGGL, LLAQMSGAMALGGTIGLTIA, and LVAAFHSLVGLAAVLTCIAEY. The Cytoplasmic portion of the chain corresponds to 723-739; sequence IIEYPHFATDAAANLTK. A run of 5 helical transmembrane segments spans residues 740–760, 778–797, 801–819, 833–853, and 857–879; these read IVAYLGTYIGGVTFSGSLVAY, HLLNAGLLAGSVGGIIPFMM, FTTGITCLGSVSALSAVMG, VVITVLNSYSGWALCAEGFLL, and LLTIVGALIGSSGAILSYIMCVA. The Mitochondrial matrix portion of the chain corresponds to 880–1086; it reads MNRSLANVIL…QAKVRESYQK (207 aa). NADP(+)-binding positions include tyrosine 933, 965-970, 1009-1011, 1026-1027, 1042-1049, and 1068-1069; these read VAGRMP, NDT, GM, KRSLGVGY, and DA. An N6-succinyllysine modification is found at lysine 1079.

The protein in the N-terminal section; belongs to the AlaDH/PNT family. In the C-terminal section; belongs to the PNT beta subunit family. In terms of assembly, homodimer.

It is found in the mitochondrion inner membrane. It carries out the reaction NAD(+) + NADPH + H(+)(in) = NADH + NADP(+) + H(+)(out). Functionally, the transhydrogenation between NADH and NADP is coupled to respiration and ATP hydrolysis and functions as a proton pump across the membrane. May play a role in reactive oxygen species (ROS) detoxification in the adrenal gland. The polypeptide is NAD(P) transhydrogenase, mitochondrial (NNT) (Bos taurus (Bovine)).